The primary structure comprises 1018 residues: Pleckstrin homology domain-containing family M member 2 (1018 aa).

Methionine 1 carries the N-acetylmethionine modification. Residues 1 to 289 (MEPREVKDRI…PDQPDACTEL (289 aa)) form an interaction with KIF5B region. Positions 36–158 (RNHDKVLQRL…IRFDLDLDAP (123 aa)) constitute an RUN domain. Disordered regions lie at residues 210 to 367 (SAIA…SSEL), 407 to 440 (TWCSHADPPEQSFRAGSPGEAPEKPPFCDFSEGL), 452 to 520 (ESPS…DSQL), 526 to 545 (EPLVSQEPVPEPVSQPEPGT), and 555 to 583 (DQPSPCLSSAEDSGVEEGQGSPSEMTHPS). Low complexity predominate over residues 230 to 245 (STASDLTSSKTSTKSP). Residues 258-270 (ETASSDTTPVHTT) are compositionally biased toward polar residues. Positions 294-306 (VTKKKKIGKKKKT) are enriched in basic residues. Polar residues-rich tracts occupy residues 316 to 325 (HPTSSQQKCG) and 347 to 367 (VLASPQEQGEGLSSTAGSSEL). Serine 423 bears the Phosphoserine mark. In terms of domain architecture, PH spans 770–872 (TITKEGMLHY…WMQHLCQAVS (103 aa)).

In terms of assembly, interacts with KLC2 (via TPR repeats). Interacts with KIF5B. Interacts with BORCS5. Interacts (via RUN domain) with ARL8B (GTP-bound form); PLEKHM1 and PLEKHM2 compete for interaction with ARL8B. Interacts with ARL8A.

It localises to the cytoplasm. The protein localises to the lysosome membrane. Functionally, plays a role in lysosomes movement and localization at the cell periphery acting as an effector of ARL8B. Required for ARL8B to exert its effects on lysosome location, recruits kinesin-1 to lysosomes and hence direct their movement toward microtubule plus ends. Binding to ARL8B provides a link from lysosomal membranes to plus-end-directed motility. Critical factor involved in NK cell-mediated cytotoxicity. Drives the polarization of cytolytic granules and microtubule-organizing centers (MTOCs) toward the immune synapse between effector NK lymphocytes and target cells. Required for maintenance of the Golgi apparatus organization. May play a role in membrane tubulation. In Mus musculus (Mouse), this protein is Pleckstrin homology domain-containing family M member 2.